The following is a 100-amino-acid chain: Movement protein TGBp3 (100 aa).

The Lumenal segment spans residues 1 to 41 (MQTAPREYSTSGPTAVLAPTTNTQHYAPYSLYRFLSSHKLD). The chain crosses the membrane as a helical span at residues 42–59 (LLLGIALLVFLYVITAAP). Topologically, residues 60–100 (KEVCQVVITGESVVIRNCQQPDRILANLNLSPWNGVKFPLL) are cytoplasmic.

The protein belongs to the Tymovirales TGBp3 protein family.

It is found in the host endoplasmic reticulum membrane. Functionally, plays a role in viral cell-to-cell propagation, by facilitating genome transport to neighboring plant cells through plasmosdesmata. May induce the formation of granular vesicles derived from the Endoplasmic reticulum, which align on actin filaments. This is Movement protein TGBp3 from Narcissus mosaic virus (NMV).